Consider the following 372-residue polypeptide: MSNKDIRVVVGMSGGVDSSVTAHVLKEQGYDVIGIFMKNWDDTDENGVCTATEDYNDVIEVCNQIGIPYYAVNFEKEYWDKVFTYFLDEYKKGRTPNPDVMCNKEIKFKAFLDHAMNLGADYVATGHYARIHRHEDGHVEMLRGVDNNKDQTYFLNQLSQQQLSKVMFPIGDIEKIEVRRIAEEQGLVTAKKKDSTGICFIGEKNFKTFLSQYLPAQPGDMITLDGKKMGKHSGLMYYTIGQRHGLGIGGDGDPWFVVGKNLKDNVLYVEQGFHHDALYSDYLIASDYSFVNPEDNDLDQGFECTAKFRYRQKDTKVFVKRENDHALRVTFAEPVRAITPGQAVVFYQGDVCLGGATIDDVFKNEGQLNYVV.

Residues 11-18 (GMSGGVDS) and methionine 37 contribute to the ATP site. An interaction with target base in tRNA region spans residues 97-99 (NPD). Cysteine 102 acts as the Nucleophile in catalysis. The cysteines at positions 102 and 199 are disulfide-linked. Position 126 (glycine 126) interacts with ATP. Positions 149–151 (KDQ) are interaction with tRNA. Residue cysteine 199 is the Cysteine persulfide intermediate of the active site. An interaction with tRNA region spans residues 309 to 310 (RY).

It belongs to the MnmA/TRMU family.

Its subcellular location is the cytoplasm. It catalyses the reaction S-sulfanyl-L-cysteinyl-[protein] + uridine(34) in tRNA + AH2 + ATP = 2-thiouridine(34) in tRNA + L-cysteinyl-[protein] + A + AMP + diphosphate + H(+). Functionally, catalyzes the 2-thiolation of uridine at the wobble position (U34) of tRNA, leading to the formation of s(2)U34. The polypeptide is tRNA-specific 2-thiouridylase MnmA (Staphylococcus aureus (strain MSSA476)).